The following is a 969-amino-acid chain: Surface protein P113 (969 aa).

Residues M1 to C22 form the signal peptide. N207 carries an N-linked (GlcNAc...) asparagine glycan. The interval I223 to N328 is disordered. Polar residues predominate over residues D229–N241. N-linked (GlcNAc...) asparagine glycosylation occurs at N268. Positions K300–S311 are enriched in basic and acidic residues. A compositionally biased stretch (low complexity) spans S312–N325. N317, N360, N661, and N697 each carry an N-linked (GlcNAc...) asparagine glycan. A compositionally biased stretch (polar residues) spans S688–Q705. Positions S688–S947 are disordered. Positions Q713 to N727 are enriched in low complexity. The span at N728–Q749 shows a compositional bias: basic and acidic residues. N-linked (GlcNAc...) asparagine glycosylation is present at N779. Acidic residues predominate over residues E798–E811. Residues S812–E822 are compositionally biased toward basic and acidic residues. The span at Q823–T841 shows a compositional bias: acidic residues. Basic and acidic residues predominate over residues E842–Q854. Positions K855 to E864 are enriched in acidic residues. N876 carries N-linked (GlcNAc...) asparagine glycosylation. Over residues E883 to Q896 the composition is skewed to basic and acidic residues. The span at G897–S907 shows a compositional bias: low complexity. A compositionally biased stretch (basic and acidic residues) spans S908–E917. Residues D918–T936 show a composition bias toward acidic residues. Positions P937 to S947 are enriched in polar residues. N-linked (GlcNAc...) asparagine glycans are attached at residues N938, N941, and N945. N945 is lipidated: GPI-anchor amidated asparagine. A propeptide spans G946–L969 (removed in mature form).

In terms of assembly, forms a complex composed of RH5, P113 and human BSG/basigin; the complex bridges the merozoite and host erythrocyte membranes. Within the complex, interacts with RH5 (via N-terminus); the interaction tethers RH5 to the merozoite membrane.

Its subcellular location is the cell membrane. Functionally, membrane receptor which tethers secreted RH5 to the merozoite membrane during merozoite invasion of host erythocytes. The polypeptide is Surface protein P113 (Plasmodium falciparum (isolate 3D7)).